The following is a 73-amino-acid chain: Large ribosomal subunit protein bL31 (73 aa).

Zn(2+) contacts are provided by C16, C18, C38, and C41.

Belongs to the bacterial ribosomal protein bL31 family. Type A subfamily. As to quaternary structure, part of the 50S ribosomal subunit. It depends on Zn(2+) as a cofactor.

In terms of biological role, binds the 23S rRNA. In Streptomyces avermitilis (strain ATCC 31267 / DSM 46492 / JCM 5070 / NBRC 14893 / NCIMB 12804 / NRRL 8165 / MA-4680), this protein is Large ribosomal subunit protein bL31.